The primary structure comprises 513 residues: Histidine ammonia-lyase (513 aa).

The segment at residues 144 to 146 is a cross-link (5-imidazolinone (Ala-Gly)); the sequence is ASG. S145 carries the post-translational modification 2,3-didehydroalanine (Ser).

This sequence belongs to the PAL/histidase family. In terms of processing, contains an active site 4-methylidene-imidazol-5-one (MIO), which is formed autocatalytically by cyclization and dehydration of residues Ala-Ser-Gly.

The protein resides in the cytoplasm. It carries out the reaction L-histidine = trans-urocanate + NH4(+). It functions in the pathway amino-acid degradation; L-histidine degradation into L-glutamate; N-formimidoyl-L-glutamate from L-histidine: step 1/3. The polypeptide is Histidine ammonia-lyase (Streptococcus sanguinis (strain SK36)).